The following is a 280-amino-acid chain: Phosphatidylserine decarboxylase proenzyme (280 aa).

Active-site charge relay system; for autoendoproteolytic cleavage activity residues include Asp90, His146, and Ser247. Residue Ser247 is the Schiff-base intermediate with substrate; via pyruvic acid; for decarboxylase activity of the active site. A Pyruvic acid (Ser); by autocatalysis modification is found at Ser247.

It belongs to the phosphatidylserine decarboxylase family. PSD-B subfamily. Prokaryotic type I sub-subfamily. In terms of assembly, heterodimer of a large membrane-associated beta subunit and a small pyruvoyl-containing alpha subunit. It depends on pyruvate as a cofactor. Is synthesized initially as an inactive proenzyme. Formation of the active enzyme involves a self-maturation process in which the active site pyruvoyl group is generated from an internal serine residue via an autocatalytic post-translational modification. Two non-identical subunits are generated from the proenzyme in this reaction, and the pyruvate is formed at the N-terminus of the alpha chain, which is derived from the carboxyl end of the proenzyme. The autoendoproteolytic cleavage occurs by a canonical serine protease mechanism, in which the side chain hydroxyl group of the serine supplies its oxygen atom to form the C-terminus of the beta chain, while the remainder of the serine residue undergoes an oxidative deamination to produce ammonia and the pyruvoyl prosthetic group on the alpha chain. During this reaction, the Ser that is part of the protease active site of the proenzyme becomes the pyruvoyl prosthetic group, which constitutes an essential element of the active site of the mature decarboxylase.

It localises to the cell membrane. It catalyses the reaction a 1,2-diacyl-sn-glycero-3-phospho-L-serine + H(+) = a 1,2-diacyl-sn-glycero-3-phosphoethanolamine + CO2. It participates in phospholipid metabolism; phosphatidylethanolamine biosynthesis; phosphatidylethanolamine from CDP-diacylglycerol: step 2/2. Its function is as follows. Catalyzes the formation of phosphatidylethanolamine (PtdEtn) from phosphatidylserine (PtdSer). This chain is Phosphatidylserine decarboxylase proenzyme, found in Myxococcus xanthus (strain DK1622).